The following is a 61-amino-acid chain: Temporin-CDYa (61 aa).

The first 22 residues, 1–22, serve as a signal peptide directing secretion; the sequence is MFPLKKSLLLLFFLGTINFSFC. Residues 23-44 constitute a propeptide that is removed on maturation; the sequence is EEERNAEEERRDDPEERDVAME. The residue at position 59 (Leu59) is a Leucine amide.

Belongs to the frog skin active peptide (FSAP) family. Temporin subfamily. As to expression, expressed by the skin glands.

The protein resides in the secreted. In terms of biological role, antimicrobial peptide. The sequence is that of Temporin-CDYa from Rana dybowskii (Dybovsky's frog).